The following is a 684-amino-acid chain: DNA-directed RNA polymerase subunit beta' (684 aa).

Zn(2+) contacts are provided by Cys-69, Cys-71, Cys-87, and Cys-90. Asp-491, Asp-493, and Asp-495 together coordinate Mg(2+).

It belongs to the RNA polymerase beta' chain family. RpoC1 subfamily. In terms of assembly, in plastids the minimal PEP RNA polymerase catalytic core is composed of four subunits: alpha, beta, beta', and beta''. When a (nuclear-encoded) sigma factor is associated with the core the holoenzyme is formed, which can initiate transcription. Mg(2+) serves as cofactor. The cofactor is Zn(2+).

It localises to the plastid. It is found in the chloroplast. The catalysed reaction is RNA(n) + a ribonucleoside 5'-triphosphate = RNA(n+1) + diphosphate. In terms of biological role, DNA-dependent RNA polymerase catalyzes the transcription of DNA into RNA using the four ribonucleoside triphosphates as substrates. The polypeptide is DNA-directed RNA polymerase subunit beta' (Phaseolus vulgaris (Kidney bean)).